We begin with the raw amino-acid sequence, 316 residues long: MDKKPPLTLYLAAPRGFCAGVDRAIKIVEMALQKWGAPVYVRHEIVHNKFVVDSLRDKGAVFVEELDDVPSDRPVIFSAHGVPKAVPAEARRREMVFVDATCPLVSKVHVEAERHHAEGLQMVMIGHAGHPEVLGTMGQLPEGEVLLVETVEDVARIEPRDPGRLAFITQTTLSVDDTAAIVAALQARFPGIRGPAKEDICYATTNRQASVKAIAGRIDALLVIGAPNSSNSRRLVEVGSAAGCAYSQLVMRADQIDWRAIAGARAVGVTAGASAPEVLVDEVVAAFHARYDLTVEMVETARENVEFKVPRVLREA.

Residue Cys-18 participates in [4Fe-4S] cluster binding. (2E)-4-hydroxy-3-methylbut-2-enyl diphosphate-binding residues include His-47 and His-80. Residues His-47 and His-80 each coordinate dimethylallyl diphosphate. 2 residues coordinate isopentenyl diphosphate: His-47 and His-80. Cys-102 serves as a coordination point for [4Fe-4S] cluster. Residue His-130 coordinates (2E)-4-hydroxy-3-methylbut-2-enyl diphosphate. His-130 is a binding site for dimethylallyl diphosphate. Residue His-130 coordinates isopentenyl diphosphate. Glu-132 functions as the Proton donor in the catalytic mechanism. Position 171 (Thr-171) interacts with (2E)-4-hydroxy-3-methylbut-2-enyl diphosphate. Residue Cys-201 coordinates [4Fe-4S] cluster. (2E)-4-hydroxy-3-methylbut-2-enyl diphosphate contacts are provided by Ser-229, Ser-230, Asn-231, and Ser-274. Positions 229, 230, 231, and 274 each coordinate dimethylallyl diphosphate. Isopentenyl diphosphate-binding residues include Ser-229, Ser-230, Asn-231, and Ser-274.

Belongs to the IspH family. [4Fe-4S] cluster is required as a cofactor.

The catalysed reaction is isopentenyl diphosphate + 2 oxidized [2Fe-2S]-[ferredoxin] + H2O = (2E)-4-hydroxy-3-methylbut-2-enyl diphosphate + 2 reduced [2Fe-2S]-[ferredoxin] + 2 H(+). The enzyme catalyses dimethylallyl diphosphate + 2 oxidized [2Fe-2S]-[ferredoxin] + H2O = (2E)-4-hydroxy-3-methylbut-2-enyl diphosphate + 2 reduced [2Fe-2S]-[ferredoxin] + 2 H(+). The protein operates within isoprenoid biosynthesis; dimethylallyl diphosphate biosynthesis; dimethylallyl diphosphate from (2E)-4-hydroxy-3-methylbutenyl diphosphate: step 1/1. It functions in the pathway isoprenoid biosynthesis; isopentenyl diphosphate biosynthesis via DXP pathway; isopentenyl diphosphate from 1-deoxy-D-xylulose 5-phosphate: step 6/6. In terms of biological role, catalyzes the conversion of 1-hydroxy-2-methyl-2-(E)-butenyl 4-diphosphate (HMBPP) into a mixture of isopentenyl diphosphate (IPP) and dimethylallyl diphosphate (DMAPP). Acts in the terminal step of the DOXP/MEP pathway for isoprenoid precursor biosynthesis. This chain is 4-hydroxy-3-methylbut-2-enyl diphosphate reductase, found in Paracoccus denitrificans (strain Pd 1222).